A 275-amino-acid polypeptide reads, in one-letter code: MAIHLYKTSTPSTRNGAVDSQAKSTPQKQKSLIYGQHHCGKGRNARGVITTGHRGGGHKRLYRKINFRRNEKDISGRIVTIEYDPNRNAYICLIHYGDGEKRYILHPRGARIGDTIVSGTEVPISMGNALPLTDMSLGTAIHNIEITLGKGGQLARAAGTVAKLIAKEGKSATLRLPSGEVRLVSKNCSATVGQVGNVGVNQKSLGRAGSKCWLGKRPVVRGVVMNPVDHPHGGGEGRAPIGRKRPTTPWGYPALGRRSRKRNKYSDSFILRRRK.

Disordered regions lie at residues 1–30 (MAIH…QKQK) and 225–275 (MNPV…RRRK). The segment covering 21-30 (QAKSTPQKQK) has biased composition (polar residues).

The protein belongs to the universal ribosomal protein uL2 family. As to quaternary structure, part of the 50S ribosomal subunit.

The protein resides in the plastid. The protein localises to the chloroplast. This chain is Large ribosomal subunit protein uL2c (rpl2), found in Illicium oligandrum (Star anise).